The primary structure comprises 231 residues: Putative aminodeoxychorismate lyase (231 aa).

It belongs to the class-IV pyridoxal-phosphate-dependent aminotransferase family. Pyridoxal 5'-phosphate serves as cofactor.

It localises to the cytoplasm. The protein resides in the nucleus. It catalyses the reaction 4-amino-4-deoxychorismate = 4-aminobenzoate + pyruvate + H(+). It participates in cofactor biosynthesis; tetrahydrofolate biosynthesis; 4-aminobenzoate from chorismate: step 2/2. In terms of biological role, converts 4-amino-4-deoxychorismate into 4-aminobenzoate (PABA) and pyruvate. This is Putative aminodeoxychorismate lyase from Schizosaccharomyces pombe (strain 972 / ATCC 24843) (Fission yeast).